The sequence spans 312 residues: Ribosomal protein L11 methyltransferase (312 aa).

S-adenosyl-L-methionine contacts are provided by Thr160, Gly181, Asp203, and Asn246.

This sequence belongs to the methyltransferase superfamily. PrmA family.

The protein resides in the cytoplasm. It catalyses the reaction L-lysyl-[protein] + 3 S-adenosyl-L-methionine = N(6),N(6),N(6)-trimethyl-L-lysyl-[protein] + 3 S-adenosyl-L-homocysteine + 3 H(+). In terms of biological role, methylates ribosomal protein L11. The polypeptide is Ribosomal protein L11 methyltransferase (Staphylococcus aureus (strain JH1)).